We begin with the raw amino-acid sequence, 1034 residues long: MGDKRVVLNKDIFFQRAERLYELWETGQVGLDSVNSIAVAYGDSENPYTKSSALHSWLFGHEINDTALLFLKDHIYILGSNRKVEFFGTVTGVQYNGRVPPVSTLLRDKSDKDAGNFEKLIDYIKRAEGDLGSFVKEKFNSDFVNAWNDALKADDINKTDVSLAFMHLFAVKDDKELELVRKSAQVTTTSWTAARQRYVEIIDSERRVRHSVLSSEFSAYMKDPKIQQSLAKYNADTCYDPIVMSGGNYSFKWNHDNSEAHLHNQFGSIITSFGARLSDYCTNLTRTMLIFPSAELEAAYEAILAAEFAVIAALKPGVKLKDVYKIGVDTLTEKNPKLAETLNKKELGFATGIEFRESRLSINAKCEEVVKEGMVFIVYIGVDSIPNKNKGEKGKPAAIAISDTILVKAEGDNEVLTEKAKSRLKSNVIKFKEEQENRETERDTDQKKLLGRGQRSVVLNDQTRNKTTNEDLRKERQKELGKQLNLNAKARLSKQDGGTDEKKVKKSNVSYKNEERFPQDTDVQKMLIFVDRKYDSVIVPIFGIPVPFHISMIKNCSQSVEGDFTYLRINFATPGSQVGKDNAQFPHPLAHFMKELTFRASNIKEHHSDATPPSSNLSTAFRQIKEMQKRFRTEEAEEREKDGAVKQDKLILSQNKLNPKLKDLLIRPNIIQKRITGSLEAHTNGFRYTSLRGDRIDVLYNNIKHAFFQPCDNEMIILLHFHLKNPVMWGKKKYKDVQFYTEVGEITTDLGKYHHMQDRDDMHSEQQERELRRRLNTTFNSFCEKVSRLTNDQFEFDSPFAGLGFFGVPFRSATTLKPTASCLVNLTEWPPFIVTLSEVELVHFERVSLQLKNFDMVFIFKDYKMKTQMVAQIPMSSIDKIKEWLHTCDIWYSEGIQSLNWAKVMKTITDDPEDFFENGGWTFLDAESEGEDAGDDSDESDAYDPEEADASDGGSSSASDEDESEGEETESDDDEEGSLDSDESEGKDWSDLEEEAAKADKRREVEDGGRDRDRDRDRKRPSSSKAGPSHKRRK.

Basic and acidic residues-rich tracts occupy residues 433-448 (EEQE…DQKK), 463-481 (TRNK…KELG), and 493-503 (SKQDGGTDEKK). Residues 433–511 (EEQENRETER…KKVKKSNVSY (79 aa)) are disordered. Positions 617 to 642 (LSTAFRQIKEMQKRFRTEEAEEREKD) form a coiled coil. Acidic residues-rich tracts occupy residues 926 to 950 (AESE…EADA) and 959 to 983 (SDED…DSDE). The disordered stretch occupies residues 926–1034 (AESEGEDAGD…KAGPSHKRRK (109 aa)). Basic and acidic residues predominate over residues 984–1020 (SEGKDWSDLEEEAAKADKRREVEDGGRDRDRDRDRKR). A compositionally biased stretch (basic residues) spans 1021 to 1034 (PSSSKAGPSHKRRK).

The protein belongs to the peptidase M24 family. SPT16 subfamily. Component of the FACT complex, a stable heterodimer of spt-16 and hmg-3 or hmg-4.

It is found in the nucleus. The protein localises to the chromosome. Its function is as follows. Component of the FACT complex, a general chromatin factor that acts to reorganize nucleosomes. The FACT complex is involved in multiple processes that require DNA as a template such as mRNA elongation, DNA replication and DNA repair. During transcription elongation the FACT complex acts as a histone chaperone that both destabilizes and restores nucleosomal structure. It facilitates the passage of RNA polymerase II and transcription by promoting the dissociation of one histone H2A-H2B dimer from the nucleosome, then subsequently promotes the reestablishment of the nucleosome following the passage of RNA polymerase II. This is FACT complex subunit spt-16 (spt-16) from Caenorhabditis briggsae.